The chain runs to 291 residues: Transmembrane O-methyltransferase (291 aa).

The chain crosses the membrane as a helical span at residues 31–51 (VGTMSPAIALAFLPLVVTLLV). S-adenosyl-L-methionine is bound by residues Glu137, 139 to 140 (GT), Ser145, Glu163, and Ser193.

The protein belongs to the class I-like SAM-binding methyltransferase superfamily. Cation-dependent O-methyltransferase family. As to quaternary structure, interacts with LHFPL5, PCDH15, TMC1, TMC2 and TMIE. Interacts directly with TMC1. The interaction of TOMT with TMC1 and TMC2 is required for the transportation of TMC1/2 into the stereocilia of hair cells.

The protein localises to the membrane. Its subcellular location is the cytoplasm. The protein resides in the endoplasmic reticulum. It catalyses the reaction a catechol + S-adenosyl-L-methionine = a guaiacol + S-adenosyl-L-homocysteine + H(+). Its function is as follows. Catalyzes the O-methylation, and thereby the inactivation, of catecholamine neurotransmitters and catechol hormones. Required for auditory function. Component of the cochlear hair cell's mechanotransduction (MET) machinery. Involved in the assembly of the asymmetric tip-link MET complex. Required for transportation of TMC1 and TMC2 proteins into the mechanically sensitive stereocilia of the hair cells. The function in MET is independent of the enzymatic activity. The chain is Transmembrane O-methyltransferase from Homo sapiens (Human).